The following is a 118-amino-acid chain: MARIAGINIPDHKHAVIALTAIYGIGKTRSKAILADLGIAESVKISELTEEQIDQLRDGVAKYTVEGDLRREVSMNIKRLMDLGCYRGLRHRRSLPLRGQRTKTNARTRKGPRKPIKK.

The segment at 94–118 is disordered; it reads SLPLRGQRTKTNARTRKGPRKPIKK.

The protein belongs to the universal ribosomal protein uS13 family. Part of the 30S ribosomal subunit. Forms a loose heterodimer with protein S19. Forms two bridges to the 50S subunit in the 70S ribosome.

Functionally, located at the top of the head of the 30S subunit, it contacts several helices of the 16S rRNA. In the 70S ribosome it contacts the 23S rRNA (bridge B1a) and protein L5 of the 50S subunit (bridge B1b), connecting the 2 subunits; these bridges are implicated in subunit movement. Contacts the tRNAs in the A and P-sites. In Vibrio cholerae serotype O1 (strain ATCC 39315 / El Tor Inaba N16961), this protein is Small ribosomal subunit protein uS13.